The primary structure comprises 56 residues: Ovomucoid (56 aa).

Residues 6-56 (VDCSDHPKPACLQEQKPLCGSDNKTYDNKCSFCNAVVDSNGTLTLSHFGKC) enclose the Kazal-like domain. 3 disulfide bridges follow: Cys8/Cys38, Cys16/Cys35, and Cys24/Cys56. The N-linked (GlcNAc...) asparagine glycan is linked to Asn45.

The protein localises to the secreted. This is Ovomucoid from Pipile pipile (Trinidad piping guan).